Here is a 487-residue protein sequence, read N- to C-terminus: Fatty acid desaturase 2-like protein FADS2B (487 aa).

Basic and acidic residues predominate over residues Met1 to Glu11. A disordered region spans residues Met1 to Cys20. Over Met1 to Arg175 the chain is Cytoplasmic. The 78-residue stretch at Leu62–Ser139 folds into the Cytochrome b5 heme-binding domain. Residues His97 and His120 each coordinate heme. A helical transmembrane segment spans residues Phe176–His196. Topologically, residues His197–Ser201 are lumenal. Residues Trp202–Leu222 form a helical membrane-spanning segment. The Cytoplasmic portion of the chain corresponds to Gln223–His307. The Histidine box-1 motif lies at His224–His228. The short motif at His261 to His265 is the Histidine box-2 element. Residues Leu308 to Met328 traverse the membrane as a helical segment. Topologically, residues Gln329–Arg349 are lumenal. A helical transmembrane segment spans residues Tyr350 to Val370. Over Lys371–Glu487 the chain is Cytoplasmic. A Histidine box-3 motif is present at residues Gln426–His430.

This sequence belongs to the fatty acid desaturase type 1 family.

It localises to the endoplasmic reticulum membrane. The protein operates within lipid metabolism; polyunsaturated fatty acid biosynthesis. The sequence is that of Fatty acid desaturase 2-like protein FADS2B from Mus musculus (Mouse).